Consider the following 347-residue polypeptide: Isocitrate dehydrogenase [NAD] subunit alpha, mitochondrial (347 aa).

Residues 1–8 (QKQVTRGF) constitute a mitochondrion transit peptide. Residue 14-42 (TVTLIPGDGIGPEISAAVMKIFDAAKAPI) participates in NAD(+) binding. K58 is subject to N6-succinyllysine. At T82 the chain carries Phosphothreonine. R96, R106, and R127 together coordinate substrate. K204 carries the N6-acetyllysine modification. The Mg(2+) site is built by D214, D238, and D242. K324 is subject to N6-acetyllysine; alternate. At K324 the chain carries N6-succinyllysine; alternate. At K331 the chain carries N6-succinyllysine.

Belongs to the isocitrate and isopropylmalate dehydrogenases family. As to quaternary structure, heterooligomer of subunits alpha (IDH3A), beta (IDH3B), and gamma (IDH3G) in the apparent ratio of 2:1:1. The heterodimer containing one IDH3A and one IDH3B subunit and the heterodimer containing one IDH3A and one IDH3G subunit assemble into a heterotetramer (which contains two subunits of IDH3A, one of IDH3B and one of IDH3G) and further into the heterooctamer. The cofactor is Mg(2+). Mn(2+) serves as cofactor.

Its subcellular location is the mitochondrion. The catalysed reaction is D-threo-isocitrate + NAD(+) = 2-oxoglutarate + CO2 + NADH. The heterotetramer and the heterodimer composed of IDH3A and IDH3G subunits can be allosterically activated by citrate (CIT) or/and ADP, and the two activators can act independently or synergistically. The heterodimer composed of IDH3A and IDH3B subunits cannot be allosterically regulated and the allosteric regulation of the heterotetramer is through the IDH3G subunit and not the IDH3B subunit. The IDH3G subunit contains the allosteric site which consists of a CIT-binding site and an ADP-binding site, and the binding of CIT and ADP causes conformational changes at the allosteric site which are transmitted to the active site in the catalytic subunit (IDH3A) through a cascade of conformational changes at the heterodimer interface, leading to stabilization of the isocitrate-binding at the active site and thus activation of the enzyme. ATP can activate the heterotetramer and the heterodimer composed of IDH3A and IDH3G subunits at low concentrations but inhibits their activities at high concentrations, whereas ATP exhibits only inhibitory effect on the heterodimer composed of IDH3A and IDH3B subunits. Its function is as follows. Catalytic subunit of the enzyme which catalyzes the decarboxylation of isocitrate (ICT) into alpha-ketoglutarate. The heterodimer composed of the alpha (IDH3A) and beta (IDH3B) subunits and the heterodimer composed of the alpha (IDH3A) and gamma (IDH3G) subunits, have considerable basal activity but the full activity of the heterotetramer (containing two subunits of IDH3A, one of IDH3B and one of IDH3G) requires the assembly and cooperative function of both heterodimers. The chain is Isocitrate dehydrogenase [NAD] subunit alpha, mitochondrial (IDH3A) from Macaca fascicularis (Crab-eating macaque).